Here is a 198-residue protein sequence, read N- to C-terminus: Probable septum site-determining protein MinC (198 aa).

It belongs to the MinC family. In terms of assembly, interacts with MinD and FtsZ.

In terms of biological role, cell division inhibitor that blocks the formation of polar Z ring septums. Rapidly oscillates between the poles of the cell to destabilize FtsZ filaments that have formed before they mature into polar Z rings. Prevents FtsZ polymerization. In Thermosipho melanesiensis (strain DSM 12029 / CIP 104789 / BI429), this protein is Probable septum site-determining protein MinC.